A 92-amino-acid chain; its full sequence is 11 kDa excretory-secretory protein (92 aa).

In Trichostrongylus colubriformis (Black scour worm), this protein is 11 kDa excretory-secretory protein.